Here is a 689-residue protein sequence, read N- to C-terminus: Glycine--tRNA ligase beta subunit (689 aa).

The protein belongs to the class-II aminoacyl-tRNA synthetase family. Tetramer of two alpha and two beta subunits.

Its subcellular location is the cytoplasm. The enzyme catalyses tRNA(Gly) + glycine + ATP = glycyl-tRNA(Gly) + AMP + diphosphate. The protein is Glycine--tRNA ligase beta subunit of Shewanella piezotolerans (strain WP3 / JCM 13877).